A 317-amino-acid polypeptide reads, in one-letter code: uncharacterized protein (317 aa).

This is an uncharacterized protein from Lactuca sativa (Garden lettuce).